The sequence spans 1174 residues: Nucleolar complex protein 1 (1174 aa).

6 disordered regions span residues 1–20 (MPAA…NKKI), 29–237 (VVKQ…EESQ), 715–742 (YEDV…VKSS), 893–922 (AQNK…LKEG), 944–1085 (GVDE…GGRS), and 1116–1174 (VKGQ…KRKH). Positions 33 to 63 (NKKEHPQRPKFEGKEQVKKPQKIKFGEDGKA) are enriched in basic and acidic residues. A compositionally biased stretch (polar residues) spans 95–104 (ASKSFNQNHK). 2 stretches are compositionally biased toward basic and acidic residues: residues 113–122 (KFGEDREAVH) and 176–200 (KFGD…EDGA). Composition is skewed to acidic residues over residues 207 to 216 (SDGDSDEELG) and 715 to 724 (YEDVKDEADD). 2 stretches are compositionally biased toward basic and acidic residues: residues 725–739 (TKDS…DNDV) and 897–906 (KQKEIKKDAA). Acidic residues-rich tracts occupy residues 907–916 (EEGDDGEAGE), 945–954 (VDEEQDEEEL), 981–1038 (AEDE…DEGS), and 1048–1065 (DSSD…DDED). Basic and acidic residues predominate over residues 1127–1143 (NKDKSSDKQLKWEENRR). Low complexity predominate over residues 1156-1166 (GKPAAKGGRPQ).

Belongs to the CBF/MAK21 family.

Its subcellular location is the nucleus. It localises to the nucleolus. Involved in rRNA processing and ribosome maturation. May also act as a transcription factor. The chain is Nucleolar complex protein 1 from Drosophila melanogaster (Fruit fly).